The primary structure comprises 1802 residues: U3 small nucleolar RNA-associated protein 10 (1802 aa).

One copy of the HEAT 1 repeat lies at 581–618; that stretch reads MDLQALLPFVLVTLADPSERVRREAAGILTIIGSLHKN. The next 2 helical transmembrane spans lie at 946-966 and 1002-1022; these read VQSGMSYLLSLALGSLLAIVN and ALLLVAGLSVIAPELVLHSVM. HEAT repeat units lie at residues 1046 to 1083, 1253 to 1290, 1297 to 1335, and 1758 to 1795; these read QTIDQVVPALIQSLRNQKRDVVSGTSELLLSFTAAFEH, LSLVDFLDTIEVLLQRPNDELRRKVLRLLEGRLRQNPE, TRMLDFLSVLVKIVESSPDILLKHAAVACIDRIADKYGK, and ALLPEMLPYISELMEDEDENVEKEVRKWVKQIEDVLGE.

Belongs to the HEATR1/UTP10 family. In terms of assembly, component of the ribosomal small subunit (SSU) processome.

The protein localises to the nucleus. It is found in the nucleolus. The protein resides in the membrane. Its function is as follows. Involved in nucleolar processing of pre-18S ribosomal RNA. Involved in ribosome biosynthesis. This Aspergillus oryzae (strain ATCC 42149 / RIB 40) (Yellow koji mold) protein is U3 small nucleolar RNA-associated protein 10.